A 1221-amino-acid polypeptide reads, in one-letter code: Phosphoenolpyruvate carboxylase 2 (1221 aa).

His156 is an active-site residue. Disordered regions lie at residues 443–588 and 642–661; these read TAAE…DPTF and REPA…GGGG. 2 stretches are compositionally biased toward low complexity: residues 503–513 and 550–564; these read TTTATAAAAAA and PFRE…TAAS. Gly residues-rich tracts occupy residues 565–575 and 648–661; these read GGAGGGGGGGA and AHGG…GGGG. The active site involves Lys886.

Belongs to the PEPCase type 1 family. Requires Mg(2+) as cofactor.

The protein resides in the cytoplasm. The enzyme catalyses oxaloacetate + phosphate = phosphoenolpyruvate + hydrogencarbonate. Its function is as follows. Through the carboxylation of phosphoenolpyruvate (PEP) it forms oxaloacetate, a four-carbon dicarboxylic acid source for the tricarboxylic acid cycle. This chain is Phosphoenolpyruvate carboxylase 2, found in Chlamydomonas reinhardtii (Chlamydomonas smithii).